Consider the following 570-residue polypeptide: Sulfite reductase [NADPH] hemoprotein beta-component (570 aa).

Positions 434, 440, 479, and 483 each coordinate [4Fe-4S] cluster. Cys-483 contributes to the siroheme binding site.

This sequence belongs to the nitrite and sulfite reductase 4Fe-4S domain family. As to quaternary structure, alpha(8)-beta(8). The alpha component is a flavoprotein, the beta component is a hemoprotein. It depends on siroheme as a cofactor. Requires [4Fe-4S] cluster as cofactor.

It carries out the reaction hydrogen sulfide + 3 NADP(+) + 3 H2O = sulfite + 3 NADPH + 4 H(+). It participates in sulfur metabolism; hydrogen sulfide biosynthesis; hydrogen sulfide from sulfite (NADPH route): step 1/1. In terms of biological role, component of the sulfite reductase complex that catalyzes the 6-electron reduction of sulfite to sulfide. This is one of several activities required for the biosynthesis of L-cysteine from sulfate. The sequence is that of Sulfite reductase [NADPH] hemoprotein beta-component (cysI) from Escherichia coli (strain K12).